A 284-amino-acid polypeptide reads, in one-letter code: Avenin-like b11 (284 aa).

The first 18 residues, M1–A18, serve as a signal peptide directing secretion.

The protein belongs to the prolamin family. In terms of processing, contains disulfide bonds.

Seed storage protein. Might be integrated via inter-chain disulfide bonds within the glutenin polymer. This Triticum aestivum (Wheat) protein is Avenin-like b11.